We begin with the raw amino-acid sequence, 217 residues long: MOB kinase activator 3A (217 aa).

Residues cysteine 83, cysteine 88, histidine 165, and histidine 170 each coordinate Zn(2+).

This sequence belongs to the MOB1/phocein family.

Functionally, may regulate the activity of kinases. In Bos taurus (Bovine), this protein is MOB kinase activator 3A (MOB3A).